The primary structure comprises 239 residues: Probable transcriptional regulatory protein LMOf2365_0385 (239 aa).

Belongs to the TACO1 family. YeeN subfamily.

It localises to the cytoplasm. The chain is Probable transcriptional regulatory protein LMOf2365_0385 from Listeria monocytogenes serotype 4b (strain F2365).